The chain runs to 525 residues: Ubiquitin carboxyl-terminal hydrolase 22 (525 aa).

The UBP-type zinc-finger motif lies at 21 to 138 (PGCSHLGSFK…KEEQRKAWKM (118 aa)). Cysteine 23, histidine 25, cysteine 63, cysteine 66, cysteine 76, cysteine 79, cysteine 84, histidine 89, histidine 93, histidine 99, cysteine 112, and cysteine 115 together coordinate Zn(2+). Residue lysine 129 is modified to N6-acetyllysine. Threonine 147 bears the Phosphothreonine; by CDK1 mark. Positions 176–520 (RGLINLGNTC…EGYLLFYHKQ (345 aa)) constitute a USP domain. Cysteine 185 (nucleophile) is an active-site residue. The residue at position 237 (serine 237) is a Phosphoserine; by CDK1. The active-site Proton acceptor is the histidine 479.

The protein belongs to the peptidase C19 family. UBP8 subfamily. As to quaternary structure, component of some SAGA transcription coactivator-HAT complexes, at least composed of ATXN7, ATXN7L3, ENY2, GCN5L2, SUPT3H, TAF10, TRRAP and USP22. Within the SAGA complex, ATXN7L3, ENY2 and USP22 form a subcomplex required for histone deubiquitination. Interacts directly with ATXN7L3; leading to its recruitment to the SAGA complex. Interacts with ATXN7L3 and weakly with ATXN7L3B. Interacts with MED1. In terms of processing, phosphorylated in G2/M phase, but not in G1 phase by CDK1. Ubiquitinated and subsequently degraded in a CDC20-dependent manner. Moderately expressed in various tissues including heart and skeletal muscle, and weakly expressed in lung and liver.

The protein localises to the nucleus. It localises to the cytoplasm. It carries out the reaction Thiol-dependent hydrolysis of ester, thioester, amide, peptide and isopeptide bonds formed by the C-terminal Gly of ubiquitin (a 76-residue protein attached to proteins as an intracellular targeting signal).. Deubiquitinase that plays a role in several cellular processes including transcriptional regulation, cell cycle progression or innate immunity. As part of the transcription regulatory histone acetylation (HAT) complex SAGA, catalyzes the deubiquitination of both histones H2A and H2B, thereby acting as a transcriptional coactivator. Recruited to specific gene promoters by activators such as MYC, where it is required for transcription. Facilitates cell-cycle progression by stabilizing CCNB1 and antagonizing its proteasome-mediated degradation in a cell cycle-specific manner. Modulates cell cycle progression and apoptosis also by antagonizing TP53 transcriptional activation through deacetylase SIRT1 stabilization. Plays multiple roles in immunity and inflammation. Participates in antiviral response by deubiquitinating the importin KPNA2, leading to IRF3 nuclear translocation and subsequent type I interferon production. Acts as a central regulator of type III IFN signaling by negatively regulating STING1 activation and ubiquitination. Inhibits NLRP3 inflammasome activation by promoting NLRP3 degradation through ATG5-dependent autophagy. Deubiquitinates CD274 to induce its stabilization and thereby participates in maintenance of immune tolerance to self. Controls necroptotic cell death by regulating RIPK3 phosphorylation and ubiquitination. During bacterial infection, promotes pro-inflammatory response by targeting TRAF6 and removing its 'Lys-48'-linked polyubiquitination. The sequence is that of Ubiquitin carboxyl-terminal hydrolase 22 (USP22) from Homo sapiens (Human).